The primary structure comprises 198 residues: Nucleoid occlusion factor SlmA (198 aa).

An HTH tetR-type domain is found at 9-70 (RNRREEILQS…SLIEFIEDSL (62 aa)). Residues 33 to 52 (TTAKLAASVGVSEAALYRHF) constitute a DNA-binding region (H-T-H motif). The stretch at 117 to 145 (EQDRLQGRINQLFERIEAQLRQVLREKKM) forms a coiled coil.

The protein belongs to the nucleoid occlusion factor SlmA family. In terms of assembly, homodimer. Interacts with FtsZ.

Its subcellular location is the cytoplasm. It localises to the nucleoid. Its function is as follows. Required for nucleoid occlusion (NO) phenomenon, which prevents Z-ring formation and cell division over the nucleoid. Acts as a DNA-associated cell division inhibitor that binds simultaneously chromosomal DNA and FtsZ, and disrupts the assembly of FtsZ polymers. SlmA-DNA-binding sequences (SBS) are dispersed on non-Ter regions of the chromosome, preventing FtsZ polymerization at these regions. The sequence is that of Nucleoid occlusion factor SlmA from Cronobacter sakazakii (strain ATCC BAA-894) (Enterobacter sakazakii).